A 386-amino-acid polypeptide reads, in one-letter code: EARP and GARP complex-interacting protein 1 (386 aa).

Met1 carries the post-translational modification N-acetylmethionine. WD repeat units lie at residues 132–172 (GAQG…SQAV), 182–222 (RGQL…QIYC), 226–266 (AHGQ…EPVK), and 270–310 (EHSH…SEPF). The segment at 312 to 332 (HLVDDDDVSDPEEHHTEKSKE) is disordered. Ser320 is subject to Phosphoserine. Residues 322–332 (PEEHHTEKSKE) show a composition bias toward basic and acidic residues. The stretch at 344–384 (EHEDSVYAVDWASADPWLFASLSYDGRLVINRVPRALKYHI) is one WD 5 repeat.

The protein belongs to the WD repeat EIPR1 family. As to quaternary structure, interacts with two multisubunit tethering complexes: EARP composed of VPS50, VPS51, VPS52 and VPS53 subunits and GARP complex composed of VPS51, VPS52, VPS53 and VPS54 subunits. Interacts with SNAP29. Ubiquitous. Highly expressed in brain, adipose tissue, spleen and kidney (at protein level).

The protein resides in the golgi apparatus. It is found in the trans-Golgi network. In terms of biological role, acts as a component of endosomal retrieval machinery that is involved in protein transport from early endosomes to either recycling endosomes or the trans-Golgi network. Mediates the recruitment of Golgi-associated retrograde protein (GARP) complex to the trans-Golgi network and controls early endosome-to-Golgi transport of internalized protein. Promotes the recycling of internalized transferrin receptor (TFRC) to the plasma membrane through interaction with endosome-associated recycling protein (EARP) complex. Controls proper insulin distribution and secretion, and retention of cargo in mature dense core vesicles. Required for the stability of the endosome-associated retrograde protein (EARP) complex subunits and for proper localization and association of EARP with membranes. The sequence is that of EARP and GARP complex-interacting protein 1 from Rattus norvegicus (Rat).